A 494-amino-acid chain; its full sequence is MANYFNTLNLREQLDQLGRCRFMDREEFVSEADYLKGKKVVIVGCGAQGLNQGLNMRDSGLDVSYALRQAAIDEQRQSFKNAKDNGFEVGSYETLIPQADLVVNLTPDKQHTNVVETVMPLMKEGAALGYSHGFNVVEEGMQIRKDLTVVMVAPKCPGTEVREEYKRGFGVPTLIAVHPENDPKGEGWDIAKAWAAATGGHRAGCLESSFVAEVKSDLMGEQTILCGMLQAGSIVCYEKMIAEGIDPGYAGKLLQYGWETITEALKFGGITHMMDRLSNPAKIKAFELSEELKDLMRPLYNKHMDDIISGHFSSTMMADWANDDKNLLGWRAETGETAFENYPETDVEISEQEYFDNGILMVAMVRAGVELAFEAMTASGIIDESAYYESLHELPLIANTIARKRLYEMNVVISDTAEYGNYLFANVATPLLREKFMPSVGTDVIGKGLGETSNQVDNATLIAVNETIRNHPVEYIGEELRGYMTDMKRIAVGG.

The 195-residue stretch at Leu-14–Ser-208 folds into the KARI N-terminal Rossmann domain. NADP(+)-binding positions include Cys-45 to Gln-48, Arg-68, Arg-76, Ser-78, and Asp-108 to Gln-110. His-132 is an active-site residue. NADP(+) is bound at residue Gly-158. KARI C-terminal knotted domains lie at Ser-209 to Glu-344 and Thr-345 to Met-487. The Mg(2+) site is built by Asp-217, Glu-221, Glu-389, and Glu-393. Ser-414 serves as a coordination point for substrate.

This sequence belongs to the ketol-acid reductoisomerase family. The cofactor is Mg(2+).

It catalyses the reaction (2R)-2,3-dihydroxy-3-methylbutanoate + NADP(+) = (2S)-2-acetolactate + NADPH + H(+). It carries out the reaction (2R,3R)-2,3-dihydroxy-3-methylpentanoate + NADP(+) = (S)-2-ethyl-2-hydroxy-3-oxobutanoate + NADPH + H(+). The protein operates within amino-acid biosynthesis; L-isoleucine biosynthesis; L-isoleucine from 2-oxobutanoate: step 2/4. It participates in amino-acid biosynthesis; L-valine biosynthesis; L-valine from pyruvate: step 2/4. Involved in the biosynthesis of branched-chain amino acids (BCAA). Catalyzes an alkyl-migration followed by a ketol-acid reduction of (S)-2-acetolactate (S2AL) to yield (R)-2,3-dihydroxy-isovalerate. In the isomerase reaction, S2AL is rearranged via a Mg-dependent methyl migration to produce 3-hydroxy-3-methyl-2-ketobutyrate (HMKB). In the reductase reaction, this 2-ketoacid undergoes a metal-dependent reduction by NADPH to yield (R)-2,3-dihydroxy-isovalerate. The sequence is that of Ketol-acid reductoisomerase (NADP(+)) from Vibrio parahaemolyticus serotype O3:K6 (strain RIMD 2210633).